A 229-amino-acid chain; its full sequence is Ribonuclease HII (229 aa).

Residues 42 to 229 form the RNase H type-2 domain; it reads TRIAGVDEVG…KPVHKILYQE (188 aa). The a divalent metal cation site is built by Asp-48, Glu-49, and Asp-139.

Belongs to the RNase HII family. The cofactor is Mn(2+). Mg(2+) is required as a cofactor.

The protein resides in the cytoplasm. The enzyme catalyses Endonucleolytic cleavage to 5'-phosphomonoester.. Endonuclease that specifically degrades the RNA of RNA-DNA hybrids. This is Ribonuclease HII from Ruegeria sp. (strain TM1040) (Silicibacter sp.).